The sequence spans 405 residues: Phosphopentomutase (405 aa).

Asp10, Asp303, His308, Asp344, His345, and His356 together coordinate Mn(2+).

It belongs to the phosphopentomutase family. Requires Mn(2+) as cofactor.

The protein resides in the cytoplasm. It catalyses the reaction 2-deoxy-alpha-D-ribose 1-phosphate = 2-deoxy-D-ribose 5-phosphate. The enzyme catalyses alpha-D-ribose 1-phosphate = D-ribose 5-phosphate. The protein operates within carbohydrate degradation; 2-deoxy-D-ribose 1-phosphate degradation; D-glyceraldehyde 3-phosphate and acetaldehyde from 2-deoxy-alpha-D-ribose 1-phosphate: step 1/2. In terms of biological role, isomerase that catalyzes the conversion of deoxy-ribose 1-phosphate (dRib-1-P) and ribose 1-phosphate (Rib-1-P) to deoxy-ribose 5-phosphate (dRib-5-P) and ribose 5-phosphate (Rib-5-P), respectively. The sequence is that of Phosphopentomutase from Shewanella loihica (strain ATCC BAA-1088 / PV-4).